Consider the following 356-residue polypeptide: S-adenosylmethionine:tRNA ribosyltransferase-isomerase (356 aa).

It belongs to the QueA family. Monomer.

Its subcellular location is the cytoplasm. The catalysed reaction is 7-aminomethyl-7-carbaguanosine(34) in tRNA + S-adenosyl-L-methionine = epoxyqueuosine(34) in tRNA + adenine + L-methionine + 2 H(+). Its pathway is tRNA modification; tRNA-queuosine biosynthesis. Transfers and isomerizes the ribose moiety from AdoMet to the 7-aminomethyl group of 7-deazaguanine (preQ1-tRNA) to give epoxyqueuosine (oQ-tRNA). This Escherichia coli (strain 55989 / EAEC) protein is S-adenosylmethionine:tRNA ribosyltransferase-isomerase.